The following is a 184-amino-acid chain: Photosystem I assembly protein Ycf4 (184 aa).

The next 2 membrane-spanning stretches (helical) occupy residues 22-42 (FFWA…GTSS) and 57-77 (ISFF…LFIS).

The protein belongs to the Ycf4 family.

Its subcellular location is the plastid. The protein localises to the chloroplast thylakoid membrane. In terms of biological role, seems to be required for the assembly of the photosystem I complex. The sequence is that of Photosystem I assembly protein Ycf4 from Lemna minor (Common duckweed).